A 194-amino-acid polypeptide reads, in one-letter code: MNLIPTVIETTNRGERAYDIYSRLLKDRIIMLGSQIDDNVANSIVSQLLFLQAQDSEKDIYLYINSPGGSVTAGFAIYDTIQHIKPDVQTICIGMAASMGSFLLAAGAKGKRFALPNAEVMIHQPLGGAQGQATEIEIAANHILKTREKLNRILSERTGQSIEKIQQDTDRDNFLTAAEAKEYGLIDEVMEPEK.

Residue Ser98 is the Nucleophile of the active site. His123 is a catalytic residue.

Belongs to the peptidase S14 family. As to quaternary structure, fourteen ClpP subunits assemble into 2 heptameric rings which stack back to back to give a disk-like structure with a central cavity, resembling the structure of eukaryotic proteasomes.

It localises to the cytoplasm. The catalysed reaction is Hydrolysis of proteins to small peptides in the presence of ATP and magnesium. alpha-casein is the usual test substrate. In the absence of ATP, only oligopeptides shorter than five residues are hydrolyzed (such as succinyl-Leu-Tyr-|-NHMec, and Leu-Tyr-Leu-|-Tyr-Trp, in which cleavage of the -Tyr-|-Leu- and -Tyr-|-Trp bonds also occurs).. In terms of biological role, cleaves peptides in various proteins in a process that requires ATP hydrolysis. Has a chymotrypsin-like activity. Plays a major role in the degradation of misfolded proteins. The protein is ATP-dependent Clp protease proteolytic subunit of Staphylococcus epidermidis (strain ATCC 35984 / DSM 28319 / BCRC 17069 / CCUG 31568 / BM 3577 / RP62A).